The following is a 979-amino-acid chain: UPF0182 protein MT0070 (979 aa).

7 consecutive transmembrane segments (helical) span residues 19–41 (LVTA…DIYV), 63–85 (LAIV…LLAY), 114–136 (LFGW…FDWV), 174–196 (WLFV…FGGL), 208–230 (AARV…AYWL), 261–280 (LVLV…AIFL), and 285–307 (IPAM…WPLL). The segment at 894–948 (VFGPGTGRVATXPGGDAASAPPPGAGGPAPPQGVPPPRTTQPPAAPPRGPDVPPA) is disordered. Pro residues predominate over residues 913–946 (APPPGAGGPAPPQGVPPPRTTQPPAAPPRGPDVP).

Belongs to the UPF0182 family.

It localises to the cell membrane. This Mycobacterium tuberculosis (strain CDC 1551 / Oshkosh) protein is UPF0182 protein MT0070.